Here is a 199-residue protein sequence, read N- to C-terminus: MQPIELAELLTSQAAVLTSLVVIGLILCFIGYKIFRVYSAVIGLFIGQLVGIYITINYYENALIVILASAIVGALLFALIDELGLIVTGAAFGYFVGVYLLPEYQVYAFVLAALFALINLFIEKPLTVLITSVIGASAIALAVHMGITGTHIYDILNDPKKVFDAIFSNAYFDLLWFTLVLTGIITQYVTYKEEREEEE.

7 helical membrane-spanning segments follow: residues 10–32, 37–59, 63–80, 83–100, 104–121, 126–148, and 163–185; these read LTSQAAVLTSLVVIGLILCFIGY, VYSAVIGLFIGQLVGIYITINYY, LIVILASAIVGALLFALI, LGLIVTGAAFGYFVGVYL, YQVYAFVLAALFALINLF, LTVLITSVIGASAIALAVHMGIT, and FDAIFSNAYFDLLWFTLVLTGII.

It localises to the cell membrane. This is an uncharacterized protein from Archaeoglobus fulgidus (strain ATCC 49558 / DSM 4304 / JCM 9628 / NBRC 100126 / VC-16).